Consider the following 270-residue polypeptide: Tryptophan synthase alpha chain (270 aa).

Residues Glu-50 and Asp-61 each act as proton acceptor in the active site.

It belongs to the TrpA family. In terms of assembly, tetramer of two alpha and two beta chains.

It catalyses the reaction (1S,2R)-1-C-(indol-3-yl)glycerol 3-phosphate + L-serine = D-glyceraldehyde 3-phosphate + L-tryptophan + H2O. Its pathway is amino-acid biosynthesis; L-tryptophan biosynthesis; L-tryptophan from chorismate: step 5/5. Functionally, the alpha subunit is responsible for the aldol cleavage of indoleglycerol phosphate to indole and glyceraldehyde 3-phosphate. This Chlorobium luteolum (strain DSM 273 / BCRC 81028 / 2530) (Pelodictyon luteolum) protein is Tryptophan synthase alpha chain.